Here is a 257-residue protein sequence, read N- to C-terminus: 5'-nucleotidase SurE (257 aa).

Positions 9, 10, 40, and 93 each coordinate a divalent metal cation.

Belongs to the SurE nucleotidase family. The cofactor is a divalent metal cation.

It localises to the cytoplasm. The enzyme catalyses a ribonucleoside 5'-phosphate + H2O = a ribonucleoside + phosphate. Functionally, nucleotidase that shows phosphatase activity on nucleoside 5'-monophosphates. The sequence is that of 5'-nucleotidase SurE from Campylobacter hominis (strain ATCC BAA-381 / DSM 21671 / CCUG 45161 / LMG 19568 / NCTC 13146 / CH001A).